Here is a 42-residue protein sequence, read N- to C-terminus: uncharacterized protein (42 aa).

Residues arginine 20–asparagine 42 are disordered.

This is an uncharacterized protein from Escherichia coli.